Here is a 155-residue protein sequence, read N- to C-terminus: Ribosome maturation factor RimP (155 aa).

It belongs to the RimP family.

The protein localises to the cytoplasm. In terms of biological role, required for maturation of 30S ribosomal subunits. In Parabacteroides distasonis (strain ATCC 8503 / DSM 20701 / CIP 104284 / JCM 5825 / NCTC 11152), this protein is Ribosome maturation factor RimP.